The chain runs to 177 residues: ATP synthase subunit b (177 aa).

The helical transmembrane segment at 16–36 (HLLLANMIVTIVVFLLLLILL) threads the bilayer.

The protein belongs to the ATPase B chain family. As to quaternary structure, F-type ATPases have 2 components, F(1) - the catalytic core - and F(0) - the membrane proton channel. F(1) has five subunits: alpha(3), beta(3), gamma(1), delta(1), epsilon(1). F(0) has three main subunits: a(1), b(2) and c(10-14). The alpha and beta chains form an alternating ring which encloses part of the gamma chain. F(1) is attached to F(0) by a central stalk formed by the gamma and epsilon chains, while a peripheral stalk is formed by the delta and b chains.

The protein resides in the cell membrane. In terms of biological role, f(1)F(0) ATP synthase produces ATP from ADP in the presence of a proton or sodium gradient. F-type ATPases consist of two structural domains, F(1) containing the extramembraneous catalytic core and F(0) containing the membrane proton channel, linked together by a central stalk and a peripheral stalk. During catalysis, ATP synthesis in the catalytic domain of F(1) is coupled via a rotary mechanism of the central stalk subunits to proton translocation. Functionally, component of the F(0) channel, it forms part of the peripheral stalk, linking F(1) to F(0). In Exiguobacterium sibiricum (strain DSM 17290 / CCUG 55495 / CIP 109462 / JCM 13490 / 255-15), this protein is ATP synthase subunit b.